A 1361-amino-acid chain; its full sequence is DNA-directed RNA polymerase subunit beta (1361 aa).

Belongs to the RNA polymerase beta chain family. The RNAP catalytic core consists of 2 alpha, 1 beta, 1 beta' and 1 omega subunit. When a sigma factor is associated with the core the holoenzyme is formed, which can initiate transcription.

The enzyme catalyses RNA(n) + a ribonucleoside 5'-triphosphate = RNA(n+1) + diphosphate. DNA-dependent RNA polymerase catalyzes the transcription of DNA into RNA using the four ribonucleoside triphosphates as substrates. This is DNA-directed RNA polymerase subunit beta from Dichelobacter nodosus (strain VCS1703A).